Reading from the N-terminus, the 456-residue chain is RuvB-like helicase 1 (456 aa).

70–77 contributes to the ATP binding site; that stretch reads GPPGTGKT.

This sequence belongs to the RuvB family. As to quaternary structure, forms homohexameric rings. May form a dodecamer with rept made of two stacked hexameric rings. Component of the chromatin remodeling Ino80 complex.

It localises to the nucleus. The catalysed reaction is ATP + H2O = ADP + phosphate + H(+). Acts as a transcriptional coactivator in Wg signaling caused by altered arm signaling. Pont and rept interfere antagonistically with nuclear arm signaling function, and are required to enhance or reduce arm activity, respectively. Also an essential cofactor for the normal function of Myc; required for cellular proliferation and growth. Its function is as follows. Proposed core component of the chromatin remodeling Ino80 complex which is involved in transcriptional regulation, DNA replication and probably DNA repair. The polypeptide is RuvB-like helicase 1 (Drosophila pseudoobscura pseudoobscura (Fruit fly)).